A 177-amino-acid chain; its full sequence is CDP-diacylglycerol--serine O-phosphatidyltransferase (177 aa).

5 consecutive transmembrane segments (helical) span residues 4–24 (IPCM…HSLL), 28–48 (IHSA…DGMA), 77–97 (MLAY…CALT), 116–136 (LPTF…ILSF), and 140–160 (PILL…KIKF).

This sequence belongs to the CDP-alcohol phosphatidyltransferase class-I family.

It localises to the cell membrane. It catalyses the reaction a CDP-1,2-diacyl-sn-glycerol + L-serine = a 1,2-diacyl-sn-glycero-3-phospho-L-serine + CMP + H(+). In Bacillus subtilis (strain 168), this protein is CDP-diacylglycerol--serine O-phosphatidyltransferase (pssA).